Here is a 458-residue protein sequence, read N- to C-terminus: Argininosuccinate lyase (458 aa).

The protein belongs to the lyase 1 family. Argininosuccinate lyase subfamily.

It is found in the cytoplasm. The catalysed reaction is 2-(N(omega)-L-arginino)succinate = fumarate + L-arginine. The protein operates within amino-acid biosynthesis; L-arginine biosynthesis; L-arginine from L-ornithine and carbamoyl phosphate: step 3/3. The protein is Argininosuccinate lyase of Actinobacillus pleuropneumoniae serotype 3 (strain JL03).